Here is a 303-residue protein sequence, read N- to C-terminus: MTDSTCPMIRNYGAIVPESQTMVKDDSELDIFSEKYREPVFASVLRSIGCFLGYACIPTNGLCGRYYPYKSISKGYRGVVQEFGRVKREINDGMHYVNPVTESISQVDMRIKVIDLDKKDVMTSDKLSIKIDSVVYYQVTNIHDALFKIDNVVQSIIELSYATLRNVIGNSTLEVCLTRRDKIAESIKSIVSEATNGWGIEIKSIQITDIVVPTDIINSLSSAIVAERQAEAKIILAQGNVKSAELMRQAADMLDSKVAMQVRSLEVIDKLATSNNSKIVFLPTDLNLSTRNNIIYSDIQSTN.

This sequence belongs to the band 7/mec-2 family.

In Acanthamoeba polyphaga (Amoeba), this protein is Putative band 7 family protein R614.